Consider the following 74-residue polypeptide: Protein RALF-like 25 (74 aa).

An N-terminal signal peptide occupies residues 1-22 (MKTFMIILLVICSILIVGRVEA). Cystine bridges form between C35/C44 and C62/C68.

It belongs to the plant rapid alkalinization factor (RALF) family.

It is found in the secreted. Its function is as follows. Cell signaling peptide that may regulate plant stress, growth, and development. Mediates a rapid alkalinization of extracellular space by mediating a transient increase in the cytoplasmic Ca(2+) concentration leading to a calcium-dependent signaling events through a cell surface receptor and a concomitant activation of some intracellular mitogen-activated protein kinases. The polypeptide is Protein RALF-like 25 (RALFL25) (Arabidopsis thaliana (Mouse-ear cress)).